The chain runs to 635 residues: Biosynthetic arginine decarboxylase (635 aa).

Lysine 100 bears the N6-(pyridoxal phosphate)lysine mark. Position 282–292 (282–292 (VDIGGGLGVDY)) interacts with substrate.

The protein belongs to the Orn/Lys/Arg decarboxylase class-II family. SpeA subfamily. Mg(2+) serves as cofactor. Requires pyridoxal 5'-phosphate as cofactor.

The enzyme catalyses L-arginine + H(+) = agmatine + CO2. The protein operates within amine and polyamine biosynthesis; agmatine biosynthesis; agmatine from L-arginine: step 1/1. Its function is as follows. Catalyzes the biosynthesis of agmatine from arginine. The polypeptide is Biosynthetic arginine decarboxylase (Geotalea daltonii (strain DSM 22248 / JCM 15807 / FRC-32) (Geobacter daltonii)).